We begin with the raw amino-acid sequence, 567 residues long: Geranylgeranyl transferase type-2 subunit alpha (567 aa).

PFTA repeat units lie at residues 44–78 (LDES…QLET), 88–122 (LVKA…RLPE), 124–158 (NWAR…QAAV), 159–193 (APAE…QLHP), 207–241 (VLLR…RAEP), and 363–397 (VLQS…ALDP). S98 is modified (phosphoserine). 5 LRR repeats span residues 442 to 463 (DVRV…EQLL), 464 to 486 (LVTH…AALR), 487 to 508 (CLEV…ANLP), 509 to 530 (RLRE…QTLA), and 534 to 555 (RLVF…RERL).

The protein belongs to the protein prenyltransferase subunit alpha family. In terms of assembly, heterotrimer composed of RABGGTA, RABGGTB and CHM; within this trimer, RABGGTA and RABGGTB form the catalytic component B, while CHM (component A) mediates peptide substrate binding. The Rab GGTase dimer (RGGT) interacts with CHM (component A) prior to Rab protein binding; the association is stabilized by geranylgeranyl pyrophosphate (GGpp). The CHM:RGGT:Rab complex is destabilized by GGpp. Interacts with non-phosphorylated form of RAB8A; phosphorylation of RAB8A at 'Thr-72' disrupts this interaction.

The catalysed reaction is geranylgeranyl diphosphate + L-cysteinyl-[protein] = S-geranylgeranyl-L-cysteinyl-[protein] + diphosphate. The enzymatic reaction requires the aid of a Rab escort protein (also called component A), such as CHM. In terms of biological role, catalyzes the transfer of a geranylgeranyl moiety from geranylgeranyl diphosphate to both cysteines of Rab proteins with the C-terminal sequence -XXCC, -XCXC and -CCXX, such as RAB1A, RAB3A, RAB5A and RAB7A. This chain is Geranylgeranyl transferase type-2 subunit alpha (Rabggta), found in Mus musculus (Mouse).